We begin with the raw amino-acid sequence, 258 residues long: 14-3-3 protein homolog (258 aa).

The protein belongs to the 14-3-3 family.

The polypeptide is 14-3-3 protein homolog (Encephalitozoon cuniculi (strain GB-M1) (Microsporidian parasite)).